Reading from the N-terminus, the 451-residue chain is tRNA-2-methylthio-N(6)-dimethylallyladenosine synthase (451 aa).

Residues A18–S134 enclose the MTTase N-terminal domain. [4Fe-4S] cluster contacts are provided by C27, C63, C97, C170, C174, and C177. In terms of domain architecture, Radical SAM core spans R156–E386. The TRAM domain occupies R389–L451.

The protein belongs to the methylthiotransferase family. MiaB subfamily. In terms of assembly, monomer. It depends on [4Fe-4S] cluster as a cofactor.

It is found in the cytoplasm. It carries out the reaction N(6)-dimethylallyladenosine(37) in tRNA + (sulfur carrier)-SH + AH2 + 2 S-adenosyl-L-methionine = 2-methylsulfanyl-N(6)-dimethylallyladenosine(37) in tRNA + (sulfur carrier)-H + 5'-deoxyadenosine + L-methionine + A + S-adenosyl-L-homocysteine + 2 H(+). Its function is as follows. Catalyzes the methylthiolation of N6-(dimethylallyl)adenosine (i(6)A), leading to the formation of 2-methylthio-N6-(dimethylallyl)adenosine (ms(2)i(6)A) at position 37 in tRNAs that read codons beginning with uridine. This is tRNA-2-methylthio-N(6)-dimethylallyladenosine synthase from Chloroherpeton thalassium (strain ATCC 35110 / GB-78).